We begin with the raw amino-acid sequence, 465 residues long: Light-independent protochlorophyllide reductase subunit N (465 aa).

Residues cysteine 22, cysteine 47, and cysteine 107 each contribute to the [4Fe-4S] cluster site.

This sequence belongs to the BchN/ChlN family. As to quaternary structure, protochlorophyllide reductase is composed of three subunits; ChlL, ChlN and ChlB. Forms a heterotetramer of two ChlB and two ChlN subunits. [4Fe-4S] cluster serves as cofactor.

It localises to the plastid. The protein localises to the chloroplast. It carries out the reaction chlorophyllide a + oxidized 2[4Fe-4S]-[ferredoxin] + 2 ADP + 2 phosphate = protochlorophyllide a + reduced 2[4Fe-4S]-[ferredoxin] + 2 ATP + 2 H2O. It participates in porphyrin-containing compound metabolism; chlorophyll biosynthesis (light-independent). Component of the dark-operative protochlorophyllide reductase (DPOR) that uses Mg-ATP and reduced ferredoxin to reduce ring D of protochlorophyllide (Pchlide) to form chlorophyllide a (Chlide). This reaction is light-independent. The NB-protein (ChlN-ChlB) is the catalytic component of the complex. This Marchantia polymorpha (Common liverwort) protein is Light-independent protochlorophyllide reductase subunit N.